The chain runs to 222 residues: UPF0758 protein Lcho_0695 (222 aa).

The MPN domain maps to 100–222 (VFDSPQAVRD…VVSFAERGLL (123 aa)). Zn(2+) is bound by residues His171, His173, and Asp184. The short motif at 171 to 184 (HNHPSGVAEPSRAD) is the JAMM motif element.

It belongs to the UPF0758 family.

In Leptothrix cholodnii (strain ATCC 51168 / LMG 8142 / SP-6) (Leptothrix discophora (strain SP-6)), this protein is UPF0758 protein Lcho_0695.